The primary structure comprises 607 residues: Aspartate--tRNA(Asp/Asn) ligase (607 aa).

Glutamate 168 is an L-aspartate binding site. The segment at 192-195 is aspartate; that stretch reads QLFK. Arginine 214 lines the L-aspartate pocket. Residues 214-216 and glutamine 223 contribute to the ATP site; that span reads RDE. L-aspartate is bound at residue histidine 449. Glutamate 483 provides a ligand contact to ATP. Arginine 490 lines the L-aspartate pocket. Position 535–538 (535–538) interacts with ATP; that stretch reads GWDR. A disordered region spans residues 578–607; sequence LEAGVDARPKPEARAQAGTAGPAAPVADPT. A compositionally biased stretch (basic and acidic residues) spans 580–590; sequence AGVDARPKPEA. Positions 591–607 are enriched in low complexity; the sequence is RAQAGTAGPAAPVADPT.

This sequence belongs to the class-II aminoacyl-tRNA synthetase family. Type 1 subfamily. As to quaternary structure, homodimer.

The protein localises to the cytoplasm. It catalyses the reaction tRNA(Asx) + L-aspartate + ATP = L-aspartyl-tRNA(Asx) + AMP + diphosphate. Aspartyl-tRNA synthetase with relaxed tRNA specificity since it is able to aspartylate not only its cognate tRNA(Asp) but also tRNA(Asn). Reaction proceeds in two steps: L-aspartate is first activated by ATP to form Asp-AMP and then transferred to the acceptor end of tRNA(Asp/Asn). The polypeptide is Aspartate--tRNA(Asp/Asn) ligase (Salinispora tropica (strain ATCC BAA-916 / DSM 44818 / JCM 13857 / NBRC 105044 / CNB-440)).